The chain runs to 301 residues: ATP synthase gamma chain (301 aa).

The protein belongs to the ATPase gamma chain family. F-type ATPases have 2 components, CF(1) - the catalytic core - and CF(0) - the membrane proton channel. CF(1) has five subunits: alpha(3), beta(3), gamma(1), delta(1), epsilon(1). CF(0) has three main subunits: a, b and c.

It is found in the cell inner membrane. Functionally, produces ATP from ADP in the presence of a proton gradient across the membrane. The gamma chain is believed to be important in regulating ATPase activity and the flow of protons through the CF(0) complex. This chain is ATP synthase gamma chain, found in Helicobacter pylori (strain G27).